A 381-amino-acid chain; its full sequence is Phthiodiolone/phenolphthiodiolone dimycocerosates ketoreductase (381 aa).

It belongs to the mer family. Phthiodiolone/phenolphthiodiolone dimycocerosates ketoreductase subfamily.

Catalyzes the reduction of the keto moiety of phthiodiolone dimycocerosates (DIM B) and glycosylated phenolphthiodiolone dimycocerosates to form the intermediate compounds phthiotriol and glycosylated phenolphthiotriol dimycocerosates during phthiocerol dimycocerosates (DIM A) and glycosylated phenolphthiocerol dimycocerosates (PGL) biosynthesis. The polypeptide is Phthiodiolone/phenolphthiodiolone dimycocerosates ketoreductase (Mycobacterium tuberculosis (strain CDC 1551 / Oshkosh)).